A 718-amino-acid chain; its full sequence is K(+)-insensitive pyrophosphate-energized proton pump (718 aa).

Transmembrane regions (helical) follow at residues 6–26 (AVLV…IWAI), 61–81 (IAIV…LNAA), 83–103 (GFLI…HVSV), 112–132 (AASL…AITG), 133–153 (LLVA…LTVW), and 168–188 (VSLG…GGIF). Lysine 190 serves as a coordination point for substrate. 4 residues coordinate Mg(2+): aspartate 193, aspartate 197, asparagine 220, and aspartate 223. 6 helical membrane passes run 235-255 (LFET…IFFH), 265-285 (LYPL…TFFV), 300-320 (GLIA…TLTV), 335-355 (GTNL…IVVI), 385-405 (GLAV…GGII), and 413-433 (LFGT…IVAL). Aspartate 441 contributes to the Mg(2+) binding site. 4 consecutive transmembrane segments (helical) span residues 472–492 (AVTK…LFAA), 524–544 (YVVA…GMAM), 593–613 (IIPS…VLLI), and 620–640 (AFAA…FVAI). Aspartate 650, aspartate 682, and aspartate 686 together coordinate Ca(2+). Lysine 689 provides a ligand contact to substrate. The chain crosses the membrane as a helical span at residues 695-715 (AVNPAIKITNIVALLLLAVLA).

Belongs to the H(+)-translocating pyrophosphatase (TC 3.A.10) family. K(+)-insensitive subfamily. As to quaternary structure, homodimer. Requires Mg(2+) as cofactor.

The protein resides in the cell inner membrane. It carries out the reaction diphosphate + H2O + H(+)(in) = 2 phosphate + 2 H(+)(out). Proton pump that utilizes the energy of pyrophosphate hydrolysis as the driving force for proton movement across the membrane. Generates a proton motive force. This is K(+)-insensitive pyrophosphate-energized proton pump from Brucella melitensis biotype 1 (strain ATCC 23456 / CCUG 17765 / NCTC 10094 / 16M).